The primary structure comprises 65 residues: DNA-directed RNA polymerase subunit Rpo10 (65 aa).

Residues Cys-7, Cys-10, Cys-44, and Cys-45 each coordinate Zn(2+).

Belongs to the archaeal Rpo10/eukaryotic RPB10 RNA polymerase subunit family. Part of the RNA polymerase complex. Requires Zn(2+) as cofactor.

The protein localises to the cytoplasm. The enzyme catalyses RNA(n) + a ribonucleoside 5'-triphosphate = RNA(n+1) + diphosphate. Functionally, DNA-dependent RNA polymerase (RNAP) catalyzes the transcription of DNA into RNA using the four ribonucleoside triphosphates as substrates. The sequence is that of DNA-directed RNA polymerase subunit Rpo10 from Pyrobaculum arsenaticum (strain DSM 13514 / JCM 11321 / PZ6).